We begin with the raw amino-acid sequence, 33 residues long: Ice-structuring protein GS-5 (33 aa).

Position 1 is a blocked amino end (Met) (M1).

It belongs to the type-I AFP family.

Its function is as follows. Antifreeze proteins lower the blood freezing point. The chain is Ice-structuring protein GS-5 from Myoxocephalus aenaeus (Grubby sculpin).